The chain runs to 435 residues: T-box transcription factor T (435 aa).

Positions 51 to 219 (LWLRFKELTN…YNPFAKAFLD (169 aa)) form a DNA-binding region, T-box. The disordered stretch occupies residues 279–308 (YPTLRSHRSSPYPSPYAHRNNSPTYSDNSP). The span at 297 to 308 (RNNSPTYSDNSP) shows a compositional bias: polar residues.

As to quaternary structure, monomer. In terms of tissue distribution, detected in testis, but not in other, normal tissues. Detected in lung tumors (at protein level).

It localises to the nucleus. Its function is as follows. Involved in the transcriptional regulation of genes required for mesoderm formation and differentiation. Binds to a palindromic T site 5'-TTCACACCTAGGTGTGAA-3' DNA sequence and activates gene transcription when bound to such a site. The polypeptide is T-box transcription factor T (Homo sapiens (Human)).